Reading from the N-terminus, the 56-residue chain is Ribosome biogenesis protein Nop10 (56 aa).

It belongs to the NOP10 family.

Its function is as follows. Involved in ribosome biogenesis; more specifically in 18S rRNA pseudouridylation and in cleavage of pre-rRNA. The polypeptide is Ribosome biogenesis protein Nop10 (Saccharolobus islandicus (strain Y.N.15.51 / Yellowstone #2) (Sulfolobus islandicus)).